We begin with the raw amino-acid sequence, 343 residues long: N-acetyl-gamma-glutamyl-phosphate reductase (343 aa).

C146 is a catalytic residue.

Belongs to the NAGSA dehydrogenase family. Type 1 subfamily.

The protein localises to the cytoplasm. The enzyme catalyses N-acetyl-L-glutamate 5-semialdehyde + phosphate + NADP(+) = N-acetyl-L-glutamyl 5-phosphate + NADPH + H(+). Its pathway is amino-acid biosynthesis; L-arginine biosynthesis; N(2)-acetyl-L-ornithine from L-glutamate: step 3/4. Its function is as follows. Catalyzes the NADPH-dependent reduction of N-acetyl-5-glutamyl phosphate to yield N-acetyl-L-glutamate 5-semialdehyde. The polypeptide is N-acetyl-gamma-glutamyl-phosphate reductase (Paenarthrobacter aurescens (strain TC1)).